A 365-amino-acid polypeptide reads, in one-letter code: Phosphate acyltransferase (365 aa).

The protein belongs to the PlsX family. In terms of assembly, homodimer. Probably interacts with PlsY.

It is found in the cytoplasm. The enzyme catalyses a fatty acyl-[ACP] + phosphate = an acyl phosphate + holo-[ACP]. Its pathway is lipid metabolism; phospholipid metabolism. Catalyzes the reversible formation of acyl-phosphate (acyl-PO(4)) from acyl-[acyl-carrier-protein] (acyl-ACP). This enzyme utilizes acyl-ACP as fatty acyl donor, but not acyl-CoA. The chain is Phosphate acyltransferase from Jannaschia sp. (strain CCS1).